The sequence spans 235 residues: Protein mxl-3 (235 aa).

The segment at 18-49 (EKQFRKRHHSDSSDDDSSSPKSASPSMDDDRR) is disordered. Residues 47-60 (DRRAHHNELERRRR) form a basic motif region. The bHLH domain maps to 47 to 98 (DRRAHHNELERRRRDHIKDHFTILKDAIPLLDGEKSSRALILKRAVEFIHVM). The segment at 61-98 (DHIKDHFTILKDAIPLLDGEKSSRALILKRAVEFIHVM) is helix-loop-helix motif.

Belongs to the MAX family. As to quaternary structure, may form homodimer. Interacts (via N-terminus) with skn-1 isoforms a and c. Expressed in the intestine and in the AWC sensory neurons.

Its subcellular location is the nucleus. The protein resides in the cytoplasm. In terms of biological role, transcription factor which regulates the expression of genes involved in lipid metabolism in response to nutrient availability. Binds to the E-box motif 5'-CACGTG-3'. Under well-fed conditions, binds to the promoter and represses the expression of lipase genes lipl-1, lipl-2, lipl-3 and to a lesser extent lipl-5, thereby preventing lipolysis. In response to a high-glucose diet, promotes fatty acid synthesis, elongation and desaturation by up-regulating transcription factor sbp-1 expression. Under well-fed conditions, acts remotely in the intestine to up-regulate the expression of chemoreceptor srh-234 gene in the ADL sensory neuron, possibly by regulating the insulin signaling pathway. This chain is Protein mxl-3, found in Caenorhabditis elegans.